We begin with the raw amino-acid sequence, 152 residues long: Transcriptional regulator MraZ (152 aa).

SpoVT-AbrB domains are found at residues 5–52 (ANAV…PLPE) and 81–124 (AVDL…NEDA).

Belongs to the MraZ family. Forms oligomers.

Its subcellular location is the cytoplasm. It is found in the nucleoid. This Azotobacter vinelandii (strain DJ / ATCC BAA-1303) protein is Transcriptional regulator MraZ.